A 314-amino-acid chain; its full sequence is Olfactory receptor 5G29 (314 aa).

At Met-1–Ile-25 the chain is on the extracellular side. A glycan (N-linked (GlcNAc...) asparagine) is linked at Asn-5. The helical transmembrane segment at Ala-26–Ile-46 threads the bilayer. At Thr-47–Arg-54 the chain is on the cytoplasmic side. Residues Leu-55–Ser-75 traverse the membrane as a helical segment. The Extracellular portion of the chain corresponds to Ser-76–Ala-99. Residues Cys-97 and Cys-189 are joined by a disulfide bond. Residues Gln-100–Tyr-120 form a helical membrane-spanning segment. The Cytoplasmic portion of the chain corresponds to Asp-121 to Thr-133. A helical membrane pass occupies residues Leu-134–Ile-154. The Extracellular portion of the chain corresponds to Asn-155 to Lys-196. A helical membrane pass occupies residues Val-197–Ser-217. The Cytoplasmic segment spans residues Tyr-218–Ala-237. The helical transmembrane segment at Phe-238–Ile-258 threads the bilayer. Over Tyr-259 to Asn-271 the chain is Extracellular. Residues Lys-272 to Leu-292 form a helical membrane-spanning segment. The Cytoplasmic portion of the chain corresponds to Arg-293–Ala-312.

The protein belongs to the G-protein coupled receptor 1 family.

The protein resides in the cell membrane. Potential odorant receptor. This Mus musculus (Mouse) protein is Olfactory receptor 5G29.